Here is a 289-residue protein sequence, read N- to C-terminus: Elongation factor Ts (289 aa).

The segment at 82–85 is involved in Mg(2+) ion dislocation from EF-Tu; sequence TDFV.

Belongs to the EF-Ts family.

It is found in the cytoplasm. Associates with the EF-Tu.GDP complex and induces the exchange of GDP to GTP. It remains bound to the aminoacyl-tRNA.EF-Tu.GTP complex up to the GTP hydrolysis stage on the ribosome. In Marinobacter nauticus (strain ATCC 700491 / DSM 11845 / VT8) (Marinobacter aquaeolei), this protein is Elongation factor Ts.